The following is a 61-amino-acid chain: Small ribosomal subunit protein uS14B (61 aa).

Zn(2+)-binding residues include C24, C27, C40, and C43.

The protein belongs to the universal ribosomal protein uS14 family. Zinc-binding uS14 subfamily. Part of the 30S ribosomal subunit. Contacts proteins S3 and S10. Zn(2+) serves as cofactor.

Functionally, binds 16S rRNA, required for the assembly of 30S particles and may also be responsible for determining the conformation of the 16S rRNA at the A site. This Levilactobacillus brevis (strain ATCC 367 / BCRC 12310 / CIP 105137 / JCM 1170 / LMG 11437 / NCIMB 947 / NCTC 947) (Lactobacillus brevis) protein is Small ribosomal subunit protein uS14B.